The chain runs to 342 residues: UDP-3-O-acylglucosamine N-acyltransferase (342 aa).

The active-site Proton acceptor is the His-241.

It belongs to the transferase hexapeptide repeat family. LpxD subfamily. In terms of assembly, homotrimer.

It catalyses the reaction a UDP-3-O-[(3R)-3-hydroxyacyl]-alpha-D-glucosamine + a (3R)-hydroxyacyl-[ACP] = a UDP-2-N,3-O-bis[(3R)-3-hydroxyacyl]-alpha-D-glucosamine + holo-[ACP] + H(+). It functions in the pathway bacterial outer membrane biogenesis; LPS lipid A biosynthesis. Its function is as follows. Catalyzes the N-acylation of UDP-3-O-acylglucosamine using 3-hydroxyacyl-ACP as the acyl donor. Is involved in the biosynthesis of lipid A, a phosphorylated glycolipid that anchors the lipopolysaccharide to the outer membrane of the cell. The protein is UDP-3-O-acylglucosamine N-acyltransferase of Pasteurella multocida (strain Pm70).